Here is a 252-residue protein sequence, read N- to C-terminus: Imidazole glycerol phosphate synthase subunit HisF (252 aa).

Residues aspartate 11 and aspartate 130 contribute to the active site.

The protein belongs to the HisA/HisF family. Heterodimer of HisH and HisF.

The protein localises to the cytoplasm. The catalysed reaction is 5-[(5-phospho-1-deoxy-D-ribulos-1-ylimino)methylamino]-1-(5-phospho-beta-D-ribosyl)imidazole-4-carboxamide + L-glutamine = D-erythro-1-(imidazol-4-yl)glycerol 3-phosphate + 5-amino-1-(5-phospho-beta-D-ribosyl)imidazole-4-carboxamide + L-glutamate + H(+). It functions in the pathway amino-acid biosynthesis; L-histidine biosynthesis; L-histidine from 5-phospho-alpha-D-ribose 1-diphosphate: step 5/9. IGPS catalyzes the conversion of PRFAR and glutamine to IGP, AICAR and glutamate. The HisF subunit catalyzes the cyclization activity that produces IGP and AICAR from PRFAR using the ammonia provided by the HisH subunit. The sequence is that of Imidazole glycerol phosphate synthase subunit HisF from Lactiplantibacillus plantarum (strain ATCC BAA-793 / NCIMB 8826 / WCFS1) (Lactobacillus plantarum).